Reading from the N-terminus, the 458-residue chain is Monomethylamine methyltransferase MtmB1 (458 aa).

Residue Pyl-202 is a non-standard amino acid, pyrrolysine.

This sequence belongs to the monomethylamine methyltransferase family.

The catalysed reaction is Co(I)-[methylamine-specific corrinoid protein] + methylamine + H(+) = methyl-Co(III)-[methylamine-specific corrinoid protein] + NH4(+). The protein operates within one-carbon metabolism; methanogenesis from methylamine. Functionally, catalyzes the transfer of the methyl group from monomethylamine to the corrinoid cofactor of MtmC. The sequence is that of Monomethylamine methyltransferase MtmB1 (mtmB1) from Methanosarcina barkeri (strain Fusaro / DSM 804).